The primary structure comprises 225 residues: Receptor-transporting protein 2 (225 aa).

The Cytoplasmic portion of the chain corresponds to 1–196 (MCTSLTTCEW…RAQAGSGYNF (196 aa)). The 3CxxC-type zinc-finger motif lies at 52–161 (ASGRFHCSWC…AEFCEACQEG (110 aa)). Residues 197-219 (LSLRWCLFWASLCLLVVYLQFSF) traverse the membrane as a helical segment. Residues 220-225 (LSPAFF) are Extracellular-facing.

Belongs to the TMEM7 family. As to quaternary structure, interacts with olfactory receptors. As to expression, expressed in circumvallate papillae and testis.

It localises to the cell membrane. Functionally, specifically promotes functional cell surface expression of olfactory receptors, but not of other GPCRs. The protein is Receptor-transporting protein 2 (RTP2) of Homo sapiens (Human).